The chain runs to 1749 residues: Kinase non-catalytic C-lobe domain-containing protein 1 (1749 aa).

The KIND 1 domain maps to 37–217 (VSLADILSLR…QDVSESSWRE (181 aa)). Disordered regions lie at residues 210–275 (VSES…SHSR) and 361–435 (CRLW…ARQL). Composition is skewed to basic and acidic residues over residues 363–373 (LWPEQEPEHQL) and 410–430 (ADPRDASGEAQTPRDDERIPE). In terms of domain architecture, KIND 2 spans 444–608 (VSLQDLLSQL…RASICQVYQE (165 aa)). Disordered stretches follow at residues 689–871 (ARDQ…RPAD) and 962–1061 (QASP…GGAS). Residues 702 to 717 (ERGGQREGEGEEKLSL) are compositionally biased toward basic and acidic residues. Low complexity-rich tracts occupy residues 739 to 748 (QGAAPEPLGA) and 766 to 779 (PANQPEGASSAAPG). A compositionally biased stretch (basic residues) spans 823 to 833 (HGPRHPPKPPR). The span at 853 to 871 (GERDDQSPDSVPERPRPAD) shows a compositional bias: basic and acidic residues. Phosphoserine is present on Ser964. The span at 980–990 (SQSPRSPSSKR) shows a compositional bias: low complexity. The segment covering 1005-1019 (RTSSRAPCSPTSVSD) has biased composition (polar residues). Positions 1040–1056 (VKAERAQQPEAGEDRRP) are enriched in basic and acidic residues. The stretch at 1133-1190 (QQLMMEKRNYRKTLKFYQKLLQKEKRNKGSDVKTMLSKLKGQLEEMKSRVQFLSLVKK) forms a coiled coil. In terms of domain architecture, N-terminal Ras-GEF spans 1246-1371 (KARILQAGTP…HLLGLLEVGM (126 aa)). The 252-residue stretch at 1468 to 1719 (STHQLFSQLT…SGADISTLAA (252 aa)) folds into the Ras-GEF domain.

Interacts (via KIND2) with MAP2; the interaction enhances MAP2 phosphorylation and localizes KNDC1 to dendrites. In terms of tissue distribution, expressed specifically in the cerebral cortex.

The protein resides in the cell projection. It is found in the dendrite. Its subcellular location is the perikaryon. Its function is as follows. RAS-Guanine nucleotide exchange factor (GEF) that controls the negative regulation of neuronal dendrite growth by mediating a signaling pathway linking RAS and MAP2. May be involved in cellular senescence. The protein is Kinase non-catalytic C-lobe domain-containing protein 1 of Homo sapiens (Human).